The primary structure comprises 216 residues: Ribosomal RNA large subunit methyltransferase E (216 aa).

Residues Gly60, Trp62, Asp80, Asp96, and Asp121 each coordinate S-adenosyl-L-methionine. The Proton acceptor role is filled by Lys161.

It belongs to the class I-like SAM-binding methyltransferase superfamily. RNA methyltransferase RlmE family.

The protein localises to the cytoplasm. The catalysed reaction is uridine(2552) in 23S rRNA + S-adenosyl-L-methionine = 2'-O-methyluridine(2552) in 23S rRNA + S-adenosyl-L-homocysteine + H(+). Functionally, specifically methylates the uridine in position 2552 of 23S rRNA at the 2'-O position of the ribose in the fully assembled 50S ribosomal subunit. This Pseudomonas savastanoi pv. phaseolicola (strain 1448A / Race 6) (Pseudomonas syringae pv. phaseolicola (strain 1448A / Race 6)) protein is Ribosomal RNA large subunit methyltransferase E.